The following is a 206-amino-acid chain: Endoplasmic reticulum transmembrane protein 1 (206 aa).

Over 1 to 7 (MSLYFTT) the chain is Lumenal. A helical membrane pass occupies residues 8 to 28 (LFLLLTVEMVMLFIFVLPLPF). Residues 29–45 (RIRRGIFSTYNQLTAKQ) are Cytoplasmic-facing. A helical membrane pass occupies residues 46–66 (QIKTIIFITGCLVGLLFIDSW). The Lumenal portion of the chain corresponds to 67 to 104 (KRSQIRVSLYHNDNSGSIGSSAVTPIQALASRAYNQRN). Residues 105–125 (MYISGFILYFSICIPTVMSIV) form a helical membrane-spanning segment. At 126-206 (KRLVKYQGLI…AAAEASKKGN (81 aa)) the chain is on the cytoplasmic side. The tract at residues 140 to 163 (KQKLNKPSSNSKKDSNEADSTKLQ) is disordered. Positions 150–163 (SKKDSNEADSTKLQ) are enriched in basic and acidic residues. Lys-190 is covalently cross-linked (Glycyl lysine isopeptide (Lys-Gly) (interchain with G-Cter in ubiquitin)). The short motif at 203 to 206 (KKGN) is the Di-lysine motif element.

This sequence belongs to the BCAP29/BCAP31 family.

It localises to the endoplasmic reticulum membrane. May play a role in anterograde transport of membrane proteins from the endoplasmic reticulum to the Golgi. This Saccharomyces cerevisiae (strain ATCC 204508 / S288c) (Baker's yeast) protein is Endoplasmic reticulum transmembrane protein 1 (YET1).